The chain runs to 839 residues: MAQFDTEYQRLEASYSDSPPGEEDLLVHVAEGSKSPWHHIENLDLFFSRVYNLHQKNGFTCMLIGEMFELMQFLFVVAFTTFLVSCVDYDILFANKMVNHSLHPTEPVKVTLPDAFLPAQVCSARIQENGSLITILVIAGVFWIHRLIKFIYNICCYWEIHSFYLHALRIPMSALPYCTWQEVQARIVQTQKEHQICIHKRELTELDIYHRILRFQNYMVALVNKSLLPLRFRLPGLGEVVFFTRGLKYNFELILFWGPGSLFLNEWSLKAEYKRGGQRLELAQRLSNRILWIGIANFLLCPLILIWQILYAFFSYAEVLKREPGALGARCWSLYGRCYLRHFNELEHELQSRLNRGYKPASKYMNCFLSPLLTLLAKNGAFFAGSILAVLIALTIYDEDVLAVEHVLTTVTLLGVTVTVCRSFIPDQHMVFCPEQLLRVILAHIHYMPDHWQGNAHRSQTRDEFAQLFQYKAVFILEELLSPIVTPLILIFCLRPRALEIIDFFRNFTVEVVGVGDTCSFAQMDVRQHGHPQWLSGGQTEASVYQQAEDGKTELSLMHFAITNPGWQPPRESTAFLGFLKEQVQRDGAAAGLAQGGLLPENALFTSIQSLQSESEPLSLIANVVAGSSCRGPSLSRDLQGSRHRADVASALRSFSPLQPGAAPQGRVPSTMTGSGVDARTASSGSSVWEGQLQSLVLSEYASTEMSLHALYMHQLHKQQTQAEPERHVWHRRESDESGESAPEEGGEGARAPQPIPRSASYPCATPRPGAPETTALHGGFQRRYGGITDPGTVPRGPSHFSRLPLGGWAEDGQPASRHPEPVPEEGSEDELPPQVHKV.

N-acetylalanine is present on alanine 2. The Cytoplasmic portion of the chain corresponds to alanine 2–cysteine 61. The Tyrosine-based sorting signal motif lies at tyrosine 8 to leucine 11. A phosphoserine mark is found at serine 14, serine 16, and serine 18. A helical transmembrane segment spans residues methionine 62 to valine 84. Topologically, residues serine 85 to glutamate 128 are lumenal. Asparagine 99 carries an N-linked (GlcNAc...) asparagine glycan. A helical membrane pass occupies residues asparagine 129–isoleucine 154. Residues cysteine 155–isoleucine 290 are Cytoplasmic-facing. An intramembrane segment occupies leucine 291–cysteine 301. Over proline 302 to valine 319 the chain is Cytoplasmic. The stretch at leucine 320–glycine 328 is an intramembrane region. At alanine 329–proline 371 the chain is on the cytoplasmic side. The helical transmembrane segment at leucine 372–tyrosine 397 threads the bilayer. At aspartate 398 to histidine 406 the chain is on the lumenal side. The helical transmembrane segment at valine 407–phenylalanine 424 threads the bilayer. Residues isoleucine 425–glutamine 470 are Cytoplasmic-facing. The stretch at tyrosine 471–leucine 480 is an intramembrane region. Topologically, residues leucine 481–proline 483 are cytoplasmic. The stretch at isoleucine 484–phenylalanine 492 is an intramembrane region. Topologically, residues cysteine 493 to valine 839 are cytoplasmic. Serine 656 carries the post-translational modification Phosphoserine. Disordered regions lie at residues proline 657 to serine 686 and histidine 717 to valine 839. Over residues glutamate 724 to aspartate 736 the composition is skewed to basic and acidic residues. A phosphoserine mark is found at serine 735, serine 738, serine 741, and serine 828. 2 stretches are compositionally biased toward acidic residues: residues glutamate 737 to glycine 747 and valine 823 to leucine 832.

This sequence belongs to the ATG9 family. In terms of assembly, homotrimer; forms a homotrimer with a central pore that forms a path between the two membrane leaflets. Interacts (via cytoplasmic its C-terminus) with ATG2A. Interacts with SUPT20H. Interacts (via the tyrosine-based sorting signal motif) with AP4M1; promoting association with the AP-4 complex. Interacts with ARFIP1 and ARFIP2. Interacts with ATG4A; the interaction is direct and promotes ATG9A trafficking. Post-translationally, ufmylated in a DDRGK1 dependent manner.

The protein resides in the preautophagosomal structure membrane. It is found in the cytoplasmic vesicle. The protein localises to the autophagosome membrane. Its subcellular location is the golgi apparatus. It localises to the trans-Golgi network membrane. The protein resides in the late endosome membrane. It is found in the recycling endosome membrane. The protein localises to the endoplasmic reticulum membrane. Its subcellular location is the mitochondrion membrane. It carries out the reaction a 1,2-diacyl-sn-glycero-3-phosphocholine(in) = a 1,2-diacyl-sn-glycero-3-phosphocholine(out). The catalysed reaction is a 1,2-diacyl-sn-glycero-3-phospho-L-serine(in) = a 1,2-diacyl-sn-glycero-3-phospho-L-serine(out). The enzyme catalyses a 1,2-diacyl-sn-glycero-3-phosphoethanolamine(in) = a 1,2-diacyl-sn-glycero-3-phosphoethanolamine(out). Its function is as follows. Phospholipid scramblase involved in autophagy by mediating autophagosomal membrane expansion. Cycles between the preautophagosomal structure/phagophore assembly site (PAS) and the cytoplasmic vesicle pool and supplies membrane for the growing autophagosome. Lipid scramblase activity plays a key role in preautophagosomal structure/phagophore assembly by distributing the phospholipids that arrive through ATG2 (ATG2A or ATG2B) from the cytoplasmic to the luminal leaflet of the bilayer, thereby driving autophagosomal membrane expansion. Also required to supply phosphatidylinositol 4-phosphate to the autophagosome initiation site by recruiting the phosphatidylinositol 4-kinase beta (PI4KB) in a process dependent on ARFIP2, but not ARFIP1. In addition to autophagy, also plays a role in necrotic cell death. In Mus musculus (Mouse), this protein is Autophagy-related protein 9A.